Here is a 117-residue protein sequence, read N- to C-terminus: Large ribosomal subunit protein bL20c (117 aa).

Belongs to the bacterial ribosomal protein bL20 family.

The protein localises to the plastid. It localises to the chloroplast. Binds directly to 23S ribosomal RNA and is necessary for the in vitro assembly process of the 50S ribosomal subunit. It is not involved in the protein synthesizing functions of that subunit. This is Large ribosomal subunit protein bL20c from Gossypium hirsutum (Upland cotton).